The following is a 466-amino-acid chain: Glutamate--tRNA ligase (466 aa).

Residues 10–20 (PSPTGALHIGG) carry the 'HIGH' region motif. Residues Cys99, Cys101, Cys126, and Asp128 each contribute to the Zn(2+) site. The 'KMSKS' region motif lies at 239-243 (KLSKR). Lys242 contributes to the ATP binding site.

This sequence belongs to the class-I aminoacyl-tRNA synthetase family. Glutamate--tRNA ligase type 1 subfamily. In terms of assembly, monomer. Zn(2+) is required as a cofactor.

Its subcellular location is the cytoplasm. It carries out the reaction tRNA(Glu) + L-glutamate + ATP = L-glutamyl-tRNA(Glu) + AMP + diphosphate. Functionally, catalyzes the attachment of glutamate to tRNA(Glu) in a two-step reaction: glutamate is first activated by ATP to form Glu-AMP and then transferred to the acceptor end of tRNA(Glu). This is Glutamate--tRNA ligase from Pelagibacter ubique (strain HTCC1062).